Reading from the N-terminus, the 179-residue chain is Chymotrypsin inhibitor ECI (179 aa).

Q1 carries the post-translational modification Pyrrolidone carboxylic acid. Cystine bridges form between C40-C84 and C134-C143.

This sequence belongs to the protease inhibitor I3 (leguminous Kunitz-type inhibitor) family.

Functionally, inhibition of chymotrypsin. This Erythrina variegata (Indian coral tree) protein is Chymotrypsin inhibitor ECI.